The chain runs to 529 residues: Laccase-1 (529 aa).

A signal peptide spans M1–A23. Plastocyanin-like domains are found at residues I25–Y159, D170–Y312, and T380–D499. N57 carries N-linked (GlcNAc...) asparagine glycosylation. Positions 96, 98, 141, and 143 each coordinate Cu cation. 2 disulfides stabilise this stretch: C117/C514 and C149/C236. N-linked (GlcNAc...) asparagine glycosylation is found at N239 and N282. Residues H425, H428, H430, H481, C482, H483, and H487 each contribute to the Cu cation site.

It belongs to the multicopper oxidase family. Cu cation serves as cofactor.

The protein resides in the secreted. It carries out the reaction 4 hydroquinone + O2 = 4 benzosemiquinone + 2 H2O. Its function is as follows. Lignin degradation and detoxification of lignin-derived products. This is Laccase-1 (POX1) from Pleurotus ostreatus (Oyster mushroom).